A 948-amino-acid chain; its full sequence is Coatomer subunit beta-2 (948 aa).

6 HEAT repeats span residues 49 to 87, 92 to 126, 127 to 164, 274 to 311, 312 to 349, and 391 to 428; these read ETIP…TDSK, PEMI…MKET, EIVE…LPHG, TAIR…TLHR, DIMV…HHNI, and EVAS…TNPK.

Oligomeric complex that consists of at least the alpha, beta, beta', gamma, delta, epsilon and zeta subunits.

It localises to the cytoplasm. The protein localises to the golgi apparatus membrane. It is found in the cytoplasmic vesicle. The protein resides in the COPI-coated vesicle membrane. Functionally, the coatomer is a cytosolic protein complex that binds to dilysine motifs and reversibly associates with Golgi non-clathrin-coated vesicles, which further mediate biosynthetic protein transport from the ER, via the Golgi up to the trans Golgi network. Coatomer complex is required for budding from Golgi membranes, and is essential for the retrograde Golgi-to-ER transport of dilysine-tagged proteins. This is Coatomer subunit beta-2 from Arabidopsis thaliana (Mouse-ear cress).